The sequence spans 305 residues: Glutaminase (305 aa).

The substrate site is built by Ser61, Asn113, Glu158, Asn165, Tyr189, Tyr241, and Val259.

It belongs to the glutaminase family. Homotetramer.

The catalysed reaction is L-glutamine + H2O = L-glutamate + NH4(+). In Clostridium botulinum (strain Kyoto / Type A2), this protein is Glutaminase.